Consider the following 257-residue polypeptide: Deoxyribose-phosphate aldolase (257 aa).

The active-site Proton donor/acceptor is aspartate 102. Lysine 166 acts as the Schiff-base intermediate with acetaldehyde in catalysis. The active-site Proton donor/acceptor is lysine 198.

The protein belongs to the DeoC/FbaB aldolase family. DeoC type 2 subfamily.

It is found in the cytoplasm. The catalysed reaction is 2-deoxy-D-ribose 5-phosphate = D-glyceraldehyde 3-phosphate + acetaldehyde. Its pathway is carbohydrate degradation; 2-deoxy-D-ribose 1-phosphate degradation; D-glyceraldehyde 3-phosphate and acetaldehyde from 2-deoxy-alpha-D-ribose 1-phosphate: step 2/2. Functionally, catalyzes a reversible aldol reaction between acetaldehyde and D-glyceraldehyde 3-phosphate to generate 2-deoxy-D-ribose 5-phosphate. The sequence is that of Deoxyribose-phosphate aldolase from Shewanella piezotolerans (strain WP3 / JCM 13877).